A 332-amino-acid chain; its full sequence is MQQMATGLAVTGCGSAAPETSLDNHGLSQIVDTSDEWIASRTGIRSRHLAGPDDTLAKLGAIAAQNALEMAQVEATDLDLILLATSTPDDLFGSACQIQAAIGAKHAVAFDLTAACSGFVFGMITAAQFIRTGVYRNVLLVGADVLSRWVDWTDRRSCVLFGDGAGAVVLQANDTDRLLGFALHSDGCLHDCLNVQYQGEARPLTGEINVSQGTYQPISMNGKEVYRFAVNRVPEVVEKALFQSDLKTDDIDWLLLHQANQRILDAVAKRLKVPAEKVISNIANYGNTSAATIPLALDATVRKGHIKPGDTIAASGFGAGLSWGAAIFQWQR.

Active-site residues include cysteine 116 and histidine 257. The segment at glutamine 258–arginine 262 is ACP-binding. The active site involves asparagine 287.

It belongs to the thiolase-like superfamily. FabH family. Homodimer.

The protein resides in the cytoplasm. The enzyme catalyses malonyl-[ACP] + acetyl-CoA + H(+) = 3-oxobutanoyl-[ACP] + CO2 + CoA. The protein operates within lipid metabolism; fatty acid biosynthesis. Its function is as follows. Catalyzes the condensation reaction of fatty acid synthesis by the addition to an acyl acceptor of two carbons from malonyl-ACP. Catalyzes the first condensation reaction which initiates fatty acid synthesis and may therefore play a role in governing the total rate of fatty acid production. Possesses both acetoacetyl-ACP synthase and acetyl transacylase activities. Its substrate specificity determines the biosynthesis of branched-chain and/or straight-chain of fatty acids. The polypeptide is Beta-ketoacyl-[acyl-carrier-protein] synthase III (Acaryochloris marina (strain MBIC 11017)).